We begin with the raw amino-acid sequence, 178 residues long: MKVKTIMLLFQILAISTIKSADVPNRYIQENVAVRGKATQSTLPSGAGAVLSLPGFAIDGNRDSDFSHGSCSHTTNSPNPWWRVDLLQLYTITSVTITNRGDCCGERISGARILIGNSLENNGINNPACSVIGSMETGETRTFHCPQPMIGRYVTVYLPKTEVLQLCEVEVNALLPVN.

The N-terminal stretch at 1-20 (MKVKTIMLLFQILAISTIKS) is a signal peptide. The tract at residues 29–178 (QENVAVRGKA…VEVNALLPVN (150 aa)) is F5/8 type C-like. Ca(2+)-binding residues include Asp59, Asn61, and Ser70. 3 disulfide bridges follow: Cys71/Cys167, Cys103/Cys104, and Cys129/Cys145. Alpha-L-fucose is bound by residues His73 and Arg100. Positions 100–102 (RGD) match the Cell attachment site motif. Position 107 (Arg107) interacts with alpha-L-fucose. The Ca(2+) site is built by Cys167 and Glu168.

This sequence belongs to the fucolectin family. In terms of assembly, homotrimer. In terms of tissue distribution, parenchymal hepatocytes.

The protein resides in the secreted. The protein localises to the extracellular space. In terms of biological role, acts as a defensive agent. Recognizes blood group fucosylated oligosaccharides including A, B, H and Lewis B-type antigens. Does not recognize Lewis A antigen and has low affinity for monovalent haptens. This chain is Fucolectin-1, found in Anguilla japonica (Japanese eel).